Consider the following 209-residue polypeptide: Regulator of G-protein signaling 1 (209 aa).

Residues F18–R42 are disordered. Residues K24–K38 are compositionally biased toward basic and acidic residues. Positions S85–L200 constitute an RGS domain.

As to quaternary structure, interacts with GNAI1 and GNAQ. Expressed in multiple tissues.

Its subcellular location is the cell membrane. The protein localises to the cytoplasm. It localises to the cytosol. Its function is as follows. Regulates G protein-coupled receptor signaling cascades, including signaling downstream of the N-formylpeptide chemoattractant receptors and leukotriene receptors. Inhibits B cell chemotaxis toward CXCL12. Inhibits signal transduction by increasing the GTPase activity of G protein alpha subunits, thereby driving them into their inactive GDP-bound form. In Rattus norvegicus (Rat), this protein is Regulator of G-protein signaling 1 (Rgs1).